The primary structure comprises 350 residues: Anthranilate phosphoribosyltransferase (350 aa).

5-phospho-alpha-D-ribose 1-diphosphate is bound by residues Gly-81, 84–85 (GD), Thr-89, 91–94 (NIST), 109–117 (KHGGRSVSS), and Ser-121. Gly-81 is a binding site for anthranilate. Ser-93 is a Mg(2+) binding site. Arg-167 contributes to the anthranilate binding site. Mg(2+) contacts are provided by Asp-230 and Glu-231.

The protein belongs to the anthranilate phosphoribosyltransferase family. In terms of assembly, homodimer. The cofactor is Mg(2+).

The catalysed reaction is N-(5-phospho-beta-D-ribosyl)anthranilate + diphosphate = 5-phospho-alpha-D-ribose 1-diphosphate + anthranilate. It functions in the pathway amino-acid biosynthesis; L-tryptophan biosynthesis; L-tryptophan from chorismate: step 2/5. In terms of biological role, catalyzes the transfer of the phosphoribosyl group of 5-phosphorylribose-1-pyrophosphate (PRPP) to anthranilate to yield N-(5'-phosphoribosyl)-anthranilate (PRA). The chain is Anthranilate phosphoribosyltransferase from Nitrosospira multiformis (strain ATCC 25196 / NCIMB 11849 / C 71).